We begin with the raw amino-acid sequence, 619 residues long: Probable serine/threonine-protein kinase WNK8 (619 aa).

The span at 1-14 (MSGARRCGDRRSER) shows a compositional bias: basic and acidic residues. The segment at 1–30 (MSGARRCGDRRSERSSVVGDNRNGYVETDP) is disordered. The Protein kinase domain occupies 35–291 (GRLSEVLGKG…AEELLLDPFL (257 aa)). ATP is bound by residues 115–118 (TELF) and lysine 163. Aspartate 180 functions as the Proton acceptor in the catalytic mechanism. Disordered stretches follow at residues 293–335 (PPQN…AKTT), 419–464 (YADD…PGPH), 508–555 (CSAS…SMVD), and 585–619 (GFRD…HYMF). Residues 419-428 (YADDDDDDDV) show a composition bias toward acidic residues. Residues 439–448 (SSSPTSSQGS) are compositionally biased toward low complexity. Residues 602 to 619 (QHRRRSSSKVDHKHHYMF) show a composition bias toward basic residues.

This sequence belongs to the protein kinase superfamily. Ser/Thr protein kinase family. WNK subfamily.

The enzyme catalyses L-seryl-[protein] + ATP = O-phospho-L-seryl-[protein] + ADP + H(+). It catalyses the reaction L-threonyl-[protein] + ATP = O-phospho-L-threonyl-[protein] + ADP + H(+). This Oryza sativa subsp. japonica (Rice) protein is Probable serine/threonine-protein kinase WNK8 (WNK8).